Reading from the N-terminus, the 332-residue chain is Leucine carboxyl methyltransferase 1 (332 aa).

Positions 1 to 23 (MAASLRRPSFTTCSSPTDTDDEG) are disordered. S-adenosyl-L-methionine-binding positions include R71, G96, D120, 169–170 (DL), and E196.

The protein belongs to the methyltransferase superfamily. LCMT family.

The catalysed reaction is [phosphatase 2A protein]-C-terminal L-leucine + S-adenosyl-L-methionine = [phosphatase 2A protein]-C-terminal L-leucine methyl ester + S-adenosyl-L-homocysteine. In terms of biological role, methylates the carboxyl group of the C-terminal leucine residue of protein phosphatase 2A catalytic subunits to form alpha-leucine ester residues. The polypeptide is Leucine carboxyl methyltransferase 1 (LCMT1) (Bos taurus (Bovine)).